Reading from the N-terminus, the 432-residue chain is 3-phosphoshikimate 1-carboxyvinyltransferase (432 aa).

3-phosphoshikimate is bound by residues Lys23, Ser24, and Arg28. Residue Lys23 coordinates phosphoenolpyruvate. Residues Gly95 and Arg123 each coordinate phosphoenolpyruvate. 3-phosphoshikimate is bound by residues Ser167, Gln169, Asp317, and Lys344. Phosphoenolpyruvate is bound at residue Gln169. Residue Asp317 is the Proton acceptor of the active site. Residues Arg348 and Arg390 each contribute to the phosphoenolpyruvate site.

The protein belongs to the EPSP synthase family. Monomer.

It is found in the cytoplasm. It catalyses the reaction 3-phosphoshikimate + phosphoenolpyruvate = 5-O-(1-carboxyvinyl)-3-phosphoshikimate + phosphate. The protein operates within metabolic intermediate biosynthesis; chorismate biosynthesis; chorismate from D-erythrose 4-phosphate and phosphoenolpyruvate: step 6/7. In terms of biological role, catalyzes the transfer of the enolpyruvyl moiety of phosphoenolpyruvate (PEP) to the 5-hydroxyl of shikimate-3-phosphate (S3P) to produce enolpyruvyl shikimate-3-phosphate and inorganic phosphate. The sequence is that of 3-phosphoshikimate 1-carboxyvinyltransferase from Staphylococcus aureus (strain N315).